A 216-amino-acid polypeptide reads, in one-letter code: Probable ubiquitin-conjugating enzyme E2 ECU01_1010 (216 aa).

Basic residues predominate over residues 1–10; sequence MFKPSAHRRL. A disordered region spans residues 1–29; it reads MFKPSAHRRLPREDDIIQEDDEDGPLWPS. Residues 29–196 enclose the UBC core domain; sequence SALRRLSNEE…VIRIAREEDE (168 aa). Cysteine 120 acts as the Glycyl thioester intermediate in catalysis.

It belongs to the ubiquitin-conjugating enzyme family.

The catalysed reaction is S-ubiquitinyl-[E1 ubiquitin-activating enzyme]-L-cysteine + [E2 ubiquitin-conjugating enzyme]-L-cysteine = [E1 ubiquitin-activating enzyme]-L-cysteine + S-ubiquitinyl-[E2 ubiquitin-conjugating enzyme]-L-cysteine.. The protein operates within protein modification; protein ubiquitination. Its function is as follows. Catalyzes the covalent attachment of ubiquitin to other proteins so as to signal them for selective protein degradation. Involved in the formation of multiubiquitin chains. The chain is Probable ubiquitin-conjugating enzyme E2 ECU01_1010 from Encephalitozoon cuniculi (strain GB-M1) (Microsporidian parasite).